The following is a 426-amino-acid chain: Serine--tRNA ligase (426 aa).

233-235 serves as a coordination point for L-serine; the sequence is TSE. Residue 264 to 266 coordinates ATP; the sequence is RSE. Glu287 serves as a coordination point for L-serine. Residue 351-354 participates in ATP binding; it reads EISS. Ser387 lines the L-serine pocket.

The protein belongs to the class-II aminoacyl-tRNA synthetase family. Type-1 seryl-tRNA synthetase subfamily. In terms of assembly, homodimer. The tRNA molecule binds across the dimer.

It localises to the cytoplasm. The catalysed reaction is tRNA(Ser) + L-serine + ATP = L-seryl-tRNA(Ser) + AMP + diphosphate + H(+). It carries out the reaction tRNA(Sec) + L-serine + ATP = L-seryl-tRNA(Sec) + AMP + diphosphate + H(+). Its pathway is aminoacyl-tRNA biosynthesis; selenocysteinyl-tRNA(Sec) biosynthesis; L-seryl-tRNA(Sec) from L-serine and tRNA(Sec): step 1/1. In terms of biological role, catalyzes the attachment of serine to tRNA(Ser). Is also able to aminoacylate tRNA(Sec) with serine, to form the misacylated tRNA L-seryl-tRNA(Sec), which will be further converted into selenocysteinyl-tRNA(Sec). The sequence is that of Serine--tRNA ligase from Xylella fastidiosa (strain 9a5c).